Reading from the N-terminus, the 378-residue chain is Tetraacyldisaccharide 4'-kinase (378 aa).

Ala-63 to Thr-70 lines the ATP pocket.

The protein belongs to the LpxK family.

It catalyses the reaction a lipid A disaccharide + ATP = a lipid IVA + ADP + H(+). The protein operates within glycolipid biosynthesis; lipid IV(A) biosynthesis; lipid IV(A) from (3R)-3-hydroxytetradecanoyl-[acyl-carrier-protein] and UDP-N-acetyl-alpha-D-glucosamine: step 6/6. Its function is as follows. Transfers the gamma-phosphate of ATP to the 4'-position of a tetraacyldisaccharide 1-phosphate intermediate (termed DS-1-P) to form tetraacyldisaccharide 1,4'-bis-phosphate (lipid IVA). The polypeptide is Tetraacyldisaccharide 4'-kinase (Anaeromyxobacter dehalogenans (strain 2CP-C)).